We begin with the raw amino-acid sequence, 280 residues long: Bifunctional protein FolD (280 aa).

NADP(+) is bound by residues 166-168 (GRS) and Ser191.

Belongs to the tetrahydrofolate dehydrogenase/cyclohydrolase family. In terms of assembly, homodimer.

It carries out the reaction (6R)-5,10-methylene-5,6,7,8-tetrahydrofolate + NADP(+) = (6R)-5,10-methenyltetrahydrofolate + NADPH. It catalyses the reaction (6R)-5,10-methenyltetrahydrofolate + H2O = (6R)-10-formyltetrahydrofolate + H(+). It participates in one-carbon metabolism; tetrahydrofolate interconversion. Functionally, catalyzes the oxidation of 5,10-methylenetetrahydrofolate to 5,10-methenyltetrahydrofolate and then the hydrolysis of 5,10-methenyltetrahydrofolate to 10-formyltetrahydrofolate. This chain is Bifunctional protein FolD, found in Saccharophagus degradans (strain 2-40 / ATCC 43961 / DSM 17024).